The primary structure comprises 272 residues: NADPH-dependent 7-cyano-7-deazaguanine reductase (272 aa).

Residue 80-82 (VES) participates in substrate binding. Residue 82 to 83 (SK) participates in NADPH binding. Cysteine 178 (thioimide intermediate) is an active-site residue. Catalysis depends on aspartate 185, which acts as the Proton donor. A substrate-binding site is contributed by 217–218 (AE). 246 to 247 (RG) serves as a coordination point for NADPH.

It belongs to the GTP cyclohydrolase I family. QueF type 2 subfamily. As to quaternary structure, homodimer.

Its subcellular location is the cytoplasm. It catalyses the reaction 7-aminomethyl-7-carbaguanine + 2 NADP(+) = 7-cyano-7-deazaguanine + 2 NADPH + 3 H(+). The protein operates within tRNA modification; tRNA-queuosine biosynthesis. Its function is as follows. Catalyzes the NADPH-dependent reduction of 7-cyano-7-deazaguanine (preQ0) to 7-aminomethyl-7-deazaguanine (preQ1). In Rickettsia typhi (strain ATCC VR-144 / Wilmington), this protein is NADPH-dependent 7-cyano-7-deazaguanine reductase.